Reading from the N-terminus, the 1512-residue chain is ATP-dependent permease YOR1 (1512 aa).

Positions 1–68 (MSPLLPTHWG…KGMKETEDGG (68 aa)) are disordered. The span at 13–29 (APQNEPTLPSPSHSVST) shows a compositional bias: polar residues. Positions 31-65 (VGDEEKLRRSEGSDGEDRINLDSNKYDVKGMKETE) are enriched in basic and acidic residues. 5 helical membrane-spanning segments follow: residues 229 to 249 (ASLA…AGFI), 288 to 308 (GPGI…SLGM), 363 to 385 (FAAG…IIIL), 475 to 495 (GMTA…FITY), and 507 to 527 (IFTV…WPMT). Residues 246–533 (AGFIKVFGDT…WPMTLSSTAD (288 aa)) enclose the ABC transmembrane type-1 1 domain. A disordered region spans residues 594 to 656 (VLNGGKPGGP…SAPGIDEEIS (63 aa)). The segment covering 619-643 (AEEIQAETAAGQPGAGEASAEGQGQ) has biased composition (low complexity). An ABC transporter 1 domain is found at 651–871 (IDEEISEKKE…NGAFAKLIKE (221 aa)). ATP is bound at residue 683–690 (GAIGSGKS). The next 4 helical transmembrane spans lie at 937–957 (GVFM…FYVI), 974–994 (NGFY…ALFF), 1067–1087 (VILL…VSLL), and 1167–1187 (FLGS…SSVS). The ABC transmembrane type-1 2 domain occupies 943-1217 (LLFFCIVVAQ…LVRQIAEVEN (275 aa)). The ABC transporter 2 domain maps to 1255–1496 (IEFKDVRMRY…GGIFTEMCSK (242 aa)). ATP is bound at residue 1289–1296 (GRTGAGKS).

Belongs to the ABC transporter superfamily. ABCC family. Conjugate transporter (TC 3.A.1.208) subfamily.

The protein resides in the extracellular vesicle membrane. It localises to the secreted. In terms of biological role, transmembrane transporter. May play a role in the packaging or formation of extracellular vesicles (EVs), and in the export of virulence factors from EVs. Required for efficient non-lytic exocytosis from host macrophages, the process by which the yeast escapes host macrophages with both host cell and pathogen remaining viable. This chain is ATP-dependent permease YOR1, found in Cryptococcus neoformans var. grubii serotype A (strain H99 / ATCC 208821 / CBS 10515 / FGSC 9487) (Filobasidiella neoformans var. grubii).